The primary structure comprises 369 residues: Molybdenum import ATP-binding protein ModC (369 aa).

Positions 4–239 (LQLRAVVADR…PRSRFGARIA (236 aa)) constitute an ABC transporter domain. Residue 31-38 (GPNGAGKS) coordinates ATP. A Mop domain is found at 293 to 361 (HGSPRNIVGL…VKAQEVALHP (69 aa)).

This sequence belongs to the ABC transporter superfamily. Molybdate importer (TC 3.A.1.8) family. In terms of assembly, the complex is composed of two ATP-binding proteins (ModC), two transmembrane proteins (ModB) and a solute-binding protein (ModA).

It localises to the cell membrane. It carries out the reaction molybdate(out) + ATP + H2O = molybdate(in) + ADP + phosphate + H(+). Part of the ABC transporter complex ModABC involved in molybdenum import. Responsible for energy coupling to the transport system. The sequence is that of Molybdenum import ATP-binding protein ModC from Mycobacterium tuberculosis (strain CDC 1551 / Oshkosh).